The following is a 190-amino-acid chain: MQAIELKKGMIFNQDGKLIEVLKSNHHKPGKGNTVMQMDLRDVMSGAVVHKTMRPSEKVDLVNVSLKKAQYLYDDDTDFIFMDTDTYEQYLIPKEHLASEAKFLMPNIEVDLKFTDEGKLIGINLPSTVKMTVKETQPEIKGATAAGGGKPATMDTGLVVTVPDFIKEGEELIIGTENGDYKGRADSITR.

This sequence belongs to the elongation factor P family.

It localises to the cytoplasm. The protein operates within protein biosynthesis; polypeptide chain elongation. In terms of biological role, involved in peptide bond synthesis. Stimulates efficient translation and peptide-bond synthesis on native or reconstituted 70S ribosomes in vitro. Probably functions indirectly by altering the affinity of the ribosome for aminoacyl-tRNA, thus increasing their reactivity as acceptors for peptidyl transferase. The sequence is that of Elongation factor P 1 (efp1) from Lactobacillus johnsonii (strain CNCM I-12250 / La1 / NCC 533).